Reading from the N-terminus, the 361-residue chain is Alanine racemase 2 (361 aa).

The active-site Proton acceptor; specific for D-alanine is the Lys-30. Lys-30 is subject to N6-(pyridoxal phosphate)lysine. Substrate is bound at residue Arg-122. Tyr-256 acts as the Proton acceptor; specific for L-alanine in catalysis. Met-303 is a substrate binding site.

This sequence belongs to the alanine racemase family. The cofactor is pyridoxal 5'-phosphate.

The catalysed reaction is L-alanine = D-alanine. The protein operates within amino-acid biosynthesis; D-alanine biosynthesis; D-alanine from L-alanine: step 1/1. In terms of biological role, catalyzes the interconversion of L-alanine and D-alanine. May also act on other amino acids. In Staphylococcus aureus (strain Mu50 / ATCC 700699), this protein is Alanine racemase 2 (alr2).